The following is a 109-amino-acid chain: Avian agnoprotein 2b (109 aa).

The tract at residues 89-109 (QPALASRLTQPNRPNRGRLAK) is disordered.

It is found in the host cytoplasm. The polypeptide is Avian agnoprotein 2b (Psittacidae (parrots)).